We begin with the raw amino-acid sequence, 58 residues long: U-scoloptoxin(14)-Sa1a (58 aa).

Positions 1-18 (MNRILGMIFLFCLISCYA) are cleaved as a signal peptide.

Belongs to the scoloptoxin-14 family. In terms of processing, contains 4 disulfide bonds. Expressed by the venom gland.

Its subcellular location is the secreted. In Scolopendra alternans (Florida Keys giant centipede), this protein is U-scoloptoxin(14)-Sa1a.